The sequence spans 84 residues: Large ribosomal subunit protein bL31B (84 aa).

This sequence belongs to the bacterial ribosomal protein bL31 family. Type B subfamily. As to quaternary structure, part of the 50S ribosomal subunit.

This is Large ribosomal subunit protein bL31B from Bacteroides thetaiotaomicron (strain ATCC 29148 / DSM 2079 / JCM 5827 / CCUG 10774 / NCTC 10582 / VPI-5482 / E50).